The chain runs to 207 residues: Ribosomal RNA large subunit methyltransferase E (207 aa).

Residues Gly60, Trp62, Asp80, Asp96, and Asp121 each contribute to the S-adenosyl-L-methionine site. Catalysis depends on Lys161, which acts as the Proton acceptor.

Belongs to the class I-like SAM-binding methyltransferase superfamily. RNA methyltransferase RlmE family.

It is found in the cytoplasm. It carries out the reaction uridine(2552) in 23S rRNA + S-adenosyl-L-methionine = 2'-O-methyluridine(2552) in 23S rRNA + S-adenosyl-L-homocysteine + H(+). Specifically methylates the uridine in position 2552 of 23S rRNA at the 2'-O position of the ribose in the fully assembled 50S ribosomal subunit. This is Ribosomal RNA large subunit methyltransferase E from Azotobacter vinelandii (strain DJ / ATCC BAA-1303).